Consider the following 303-residue polypeptide: UDP-N-acetylenolpyruvoylglucosamine reductase (303 aa).

The 165-residue stretch at 27–191 (VGGPAARLYK…ISAKLQLTPG (165 aa)) folds into the FAD-binding PCMH-type domain. R171 is a catalytic residue. Residue S220 is the Proton donor of the active site. E291 is a catalytic residue.

The protein belongs to the MurB family. It depends on FAD as a cofactor.

The protein resides in the cytoplasm. It catalyses the reaction UDP-N-acetyl-alpha-D-muramate + NADP(+) = UDP-N-acetyl-3-O-(1-carboxyvinyl)-alpha-D-glucosamine + NADPH + H(+). The protein operates within cell wall biogenesis; peptidoglycan biosynthesis. Cell wall formation. This Legionella pneumophila (strain Paris) protein is UDP-N-acetylenolpyruvoylglucosamine reductase.